The chain runs to 152 residues: Endoribonuclease YbeY (152 aa).

Zn(2+) is bound by residues histidine 113, histidine 117, and histidine 123.

It belongs to the endoribonuclease YbeY family. It depends on Zn(2+) as a cofactor.

It is found in the cytoplasm. Its function is as follows. Single strand-specific metallo-endoribonuclease involved in late-stage 70S ribosome quality control and in maturation of the 3' terminus of the 16S rRNA. The sequence is that of Endoribonuclease YbeY from Pseudoalteromonas atlantica (strain T6c / ATCC BAA-1087).